The following is a 403-amino-acid chain: Endophilin-B2 (403 aa).

Residues 1-27 form a membrane-binding amphipathic helix region; the sequence is MDFNVKKLASDAGVFFSRAMQFTEEKL. Residues 24-287 enclose the BAR domain; sequence EEKLGQAEKT…LGRFSGTFVG (264 aa). Residues 210 to 233 are a coiled coil; sequence WSDEVEKAEHELRLTQTEFDRQAE. An SH3 domain is found at 343–403; that stretch reads SGTRKARVLY…VPVTYLELLS (61 aa).

The protein belongs to the endophilin family. As to quaternary structure, homodimer, and heterodimer with SH3GLB1.

It localises to the cytoplasm. The chain is Endophilin-B2 from Gallus gallus (Chicken).